The chain runs to 129 residues: Fluoride-specific ion channel FluC 2 (129 aa).

Helical transmembrane passes span L4–G24, T39–V59, Y65–S85, and V104–L124. The Na(+) site is built by G79 and T82.

Belongs to the fluoride channel Fluc/FEX (TC 1.A.43) family.

The protein localises to the cell inner membrane. It carries out the reaction fluoride(in) = fluoride(out). Na(+) is not transported, but it plays an essential structural role and its presence is essential for fluoride channel function. In terms of biological role, fluoride-specific ion channel. Important for reducing fluoride concentration in the cell, thus reducing its toxicity. This chain is Fluoride-specific ion channel FluC 2, found in Brucella abortus biovar 1 (strain 9-941).